The chain runs to 389 residues: Acetylornithine aminotransferase (389 aa).

Residues 96–97 (GT) and F123 contribute to the pyridoxal 5'-phosphate site. R126 provides a ligand contact to N(2)-acetyl-L-ornithine. 207–210 (DEVQ) serves as a coordination point for pyridoxal 5'-phosphate. K236 carries the N6-(pyridoxal phosphate)lysine modification. S264 is a N(2)-acetyl-L-ornithine binding site. T265 contributes to the pyridoxal 5'-phosphate binding site.

Belongs to the class-III pyridoxal-phosphate-dependent aminotransferase family. ArgD subfamily. As to quaternary structure, homodimer. Requires pyridoxal 5'-phosphate as cofactor.

The protein localises to the cytoplasm. The enzyme catalyses N(2)-acetyl-L-ornithine + 2-oxoglutarate = N-acetyl-L-glutamate 5-semialdehyde + L-glutamate. It participates in amino-acid biosynthesis; L-arginine biosynthesis; N(2)-acetyl-L-ornithine from L-glutamate: step 4/4. This Lactiplantibacillus plantarum (strain ATCC BAA-793 / NCIMB 8826 / WCFS1) (Lactobacillus plantarum) protein is Acetylornithine aminotransferase.